The chain runs to 98 residues: NADH-ubiquinone oxidoreductase chain 4L (98 aa).

A run of 3 helical transmembrane segments spans residues 2-22 (PSIS…MLMF), 29-49 (SLLC…LIIL), and 61-81 (ILLL…LVMI).

This sequence belongs to the complex I subunit 4L family. Core subunit of respiratory chain NADH dehydrogenase (Complex I) which is composed of 45 different subunits.

It is found in the mitochondrion inner membrane. It carries out the reaction a ubiquinone + NADH + 5 H(+)(in) = a ubiquinol + NAD(+) + 4 H(+)(out). Core subunit of the mitochondrial membrane respiratory chain NADH dehydrogenase (Complex I) which catalyzes electron transfer from NADH through the respiratory chain, using ubiquinone as an electron acceptor. Part of the enzyme membrane arm which is embedded in the lipid bilayer and involved in proton translocation. The polypeptide is NADH-ubiquinone oxidoreductase chain 4L (MT-ND4L) (Mirza coquereli (Coquerel's giant mouse lemur)).